A 322-amino-acid polypeptide reads, in one-letter code: 8-oxo-(d)GTP phosphatase (322 aa).

Residues 1–21 (MMPVDDLQEIPLSKDTTEKSK) form a disordered region. One can recognise a Nudix hydrolase domain in the interval 22 to 156 (HTVRAAGAVL…DDRKVLRRFV (135 aa)). Substrate-binding positions include 55-58 (RPRY), aspartate 60, and 65-67 (KGK). The Mg(2+) site is built by lysine 65, glutamate 81, and glutamate 85. A Nudix box motif is present at residues 66–87 (GKLDQGETEPVAAAREIHEETG). Substrate contacts are provided by tyrosine 101, lysine 108, glutamate 127, and tyrosine 145. Glutamate 127 contacts Mg(2+).

It belongs to the Nudix hydrolase family. Forms head-to-tail homodimers. Mg(2+) is required as a cofactor.

It catalyses the reaction 8-oxo-dGTP + H2O = 8-oxo-dGDP + phosphate + H(+). The catalysed reaction is 8-oxo-GTP + H2O = 8-oxo-GDP + phosphate + H(+). It carries out the reaction 8-oxo-dGDP + H2O = 8-oxo-dGMP + phosphate + H(+). The enzyme catalyses 8-oxo-GDP + H2O = 8-oxo-GMP + phosphate + H(+). It catalyses the reaction P(1),P(6)-bis(5'-adenosyl) hexaphosphate + H2O = 2 ATP + 2 H(+). The catalysed reaction is P(1),P(5)-bis(5'-adenosyl) pentaphosphate + H2O = ADP + ATP + 2 H(+). It carries out the reaction P(1),P(4)-bis(5'-adenosyl) tetraphosphate + H2O = AMP + ATP + 2 H(+). Ap4A hydrolysis is inhibited by fluoride ions. Functionally, catalyzes the conversion of 8-oxo-dGTP to 8-oxo-dGDP, and 8-oxo-GTP to 8-oxo-GDP. At high enzyme concentrations, can also catalyze the conversion of 8-oxo-dGDP to 8-oxo-dGMP, and 8-oxo-GDP to 8-oxo-GMP. In addition, catalyzes the hydrolysis of the diadenosine polyphosphates diadenosine hexaphosphate (Ap6A), diadenosine pentaphosphate (Ap5A) and diadenosine tetraphosphate (Ap4A). In Mycolicibacterium smegmatis (strain ATCC 700084 / mc(2)155) (Mycobacterium smegmatis), this protein is 8-oxo-(d)GTP phosphatase.